The primary structure comprises 638 residues: MIIFSNLSLKRGQTELLENASATINPKQKVGLVGKNGCGKSSLFALLKKELMPEGGEVNYPANWRVSWVNQETPALDISAIDYVIQGDREYCRLQQKLERANERNDGNAIARIHGQLETLDAWTIQSRAASLLHGLGFSQEETIQPVKAFSGGWRMRLNLAQALLCPSDLLLLDEPTNHLDLDAVIWLERWLVQYQGTLVLISHDRDFLDPIVTKILHIENQKLNEYTGDYSSFEVQRATKLAQQTAMYRQQQQKISHLQKYIDRFKAKATKAKQAQSRMKALERMELIAPAYVDNPFTFEFRPPQSLPNPLVMIEQASAGYGIGESAVEILSKIKLNLVPGSRIGLLGKNGAGKSTLIKLLAGELTALSGTVQLAKGVQLGYFAQHQLDTLRADESALWHMQKLAPEQTEQQVRDYLGSFAFHGDKVNQAVKSFSGGEKARLVLALIVWQRPNLLLLDEPTNHLDLDMRQALTEALVDYEGSLVVVSHDRHLLRNTVEEFYLVHDKKVEEFKGDLEDYQKWLSEQNSTSENKVSEKVGDNENSVQNRKEQKRREAELRQQTAPLRKKITQLEEKMNKFSSELANIENQLADTELYNAENKEKLTALLAQQVDVKKALDDVETEWMTAQEELEEMLQA.

ABC transporter domains lie at 2–246 and 313–531; these read IIFS…AQQT and VMIE…STSE. Residues 34 to 41 and 349 to 356 each bind ATP; these read GKNGCGKS and GKNGAGKS. A disordered region spans residues 525 to 563; sequence EQNSTSENKVSEKVGDNENSVQNRKEQKRREAELRQQTA. The span at 547–558 shows a compositional bias: basic and acidic residues; that stretch reads NRKEQKRREAEL.

It belongs to the ABC transporter superfamily. ABCF family. YheS subfamily.

In terms of biological role, genetic data indicate it may be involved in ribosome assembly or function. In Haemophilus influenzae (strain ATCC 51907 / DSM 11121 / KW20 / Rd), this protein is Probable ATP-binding protein YheS.